The chain runs to 362 residues: tRNA N6-adenosine threonylcarbamoyltransferase (362 aa).

Fe cation is bound by residues His-120 and His-124. Residues 142-146 (LASGG), Asp-175, Gly-188, and Asn-288 each bind substrate. Asp-316 contributes to the Fe cation binding site. A compositionally biased stretch (basic and acidic residues) spans 342–351 (RPRWPLDPDA). Positions 342–362 (RPRWPLDPDAPKAAGAGGVKA) are disordered.

It belongs to the KAE1 / TsaD family. Requires Fe(2+) as cofactor.

The protein localises to the cytoplasm. The catalysed reaction is L-threonylcarbamoyladenylate + adenosine(37) in tRNA = N(6)-L-threonylcarbamoyladenosine(37) in tRNA + AMP + H(+). Functionally, required for the formation of a threonylcarbamoyl group on adenosine at position 37 (t(6)A37) in tRNAs that read codons beginning with adenine. Is involved in the transfer of the threonylcarbamoyl moiety of threonylcarbamoyl-AMP (TC-AMP) to the N6 group of A37, together with TsaE and TsaB. TsaD likely plays a direct catalytic role in this reaction. This is tRNA N6-adenosine threonylcarbamoyltransferase from Rhodospirillum rubrum (strain ATCC 11170 / ATH 1.1.1 / DSM 467 / LMG 4362 / NCIMB 8255 / S1).